The sequence spans 570 residues: D-xylulose kinase A (570 aa).

Substrate is bound by residues histidine 95, arginine 166, aspartate 282, and asparagine 283. ATP is bound by residues tryptophan 364, 469-470, and asparagine 473; that span reads GG.

It belongs to the FGGY kinase family.

It is found in the cytoplasm. The enzyme catalyses D-xylulose + ATP = D-xylulose 5-phosphate + ADP + H(+). Highly specific D-xylulose kinase which participates in the catabolism of xylose. Xylose is a major component of hemicelluloses such as xylan. Most fungi utilize D-xylose via three enzymatic reactions, xylose reductase (XR), xylitol dehydrogenase (XDH), and xylulokinase, to form xylulose 5-phosphate, which enters pentose phosphate pathway. In Aspergillus niger, this protein is D-xylulose kinase A (xkiA).